A 100-amino-acid chain; its full sequence is Cell division topological specificity factor (100 aa).

It belongs to the MinE family.

Prevents the cell division inhibition by proteins MinC and MinD at internal division sites while permitting inhibition at polar sites. This ensures cell division at the proper site by restricting the formation of a division septum at the midpoint of the long axis of the cell. This Synechococcus sp. (strain JA-2-3B'a(2-13)) (Cyanobacteria bacterium Yellowstone B-Prime) protein is Cell division topological specificity factor.